A 192-amino-acid chain; its full sequence is MLTIDTTIEWLGKFNEKIQENKAYLSELDGPIGDGDHGANMARGMSETMKALEVSNFGNVSEIFKKVAMTLMSKVGGASGPLYGSAFLAMSKTAIETLDTSELIYAGLEAIQKRGKAQVGEKTMVDIWSAFLNDLQTDSASKDNLEKVVKASAGLLATKGRASYLGERSIGHIDPGTQSSAYLFETLLEVVA.

One can recognise a DhaL domain in the interval Asp5–Glu189. The Mg(2+) site is built by Asp29, Asp34, and Asp36. ADP-binding positions include His37 to Asn40, Ala78 to Ser79, Gly115, Met124, Arg161, and Asp174 to Gly176.

Homodimer. The dihydroxyacetone kinase complex is composed of a homodimer of DhaM, a homodimer of DhaK and the subunit DhaL. Mg(2+) is required as a cofactor.

It localises to the cytoplasm. The catalysed reaction is dihydroxyacetone + phosphoenolpyruvate = dihydroxyacetone phosphate + pyruvate. It participates in polyol metabolism; glycerol degradation. In terms of biological role, ADP-binding subunit of the dihydroxyacetone kinase, which is responsible for the phosphoenolpyruvate (PEP)-dependent phosphorylation of dihydroxyacetone. DhaL-ADP is converted to DhaL-ATP via a phosphoryl group transfer from DhaM and transmits it to dihydroxyacetone binds to DhaK. The protein is PTS-dependent dihydroxyacetone kinase, ADP-binding subunit DhaL of Lactococcus lactis subsp. lactis (strain IL1403) (Streptococcus lactis).